The chain runs to 197 residues: Peptide deformylase (197 aa).

C106 and H148 together coordinate Fe cation. Residue E149 is part of the active site. H152 serves as a coordination point for Fe cation.

It belongs to the polypeptide deformylase family. Fe(2+) serves as cofactor.

It carries out the reaction N-terminal N-formyl-L-methionyl-[peptide] + H2O = N-terminal L-methionyl-[peptide] + formate. Its function is as follows. Removes the formyl group from the N-terminal Met of newly synthesized proteins. Requires at least a dipeptide for an efficient rate of reaction. N-terminal L-methionine is a prerequisite for activity but the enzyme has broad specificity at other positions. The protein is Peptide deformylase of Mycobacterium sp. (strain JLS).